The chain runs to 466 residues: Chromosomal replication initiator protein DnaA (466 aa).

The interval 1–86 (MSLSLWQQCL…EVGTKPVTQT (86 aa)) is domain I, interacts with DnaA modulators. Residues 86 to 129 (TLKTPVHNVVAPTQTTTAQPQRVAPAARSGWDNVPAPAEPTYRS) are domain II. Residues 130 to 346 (NVNVKHTFDN…GALNRVIANA (217 aa)) are domain III, AAA+ region. ATP contacts are provided by G174, G176, K177, and T178. The domain IV, binds dsDNA stretch occupies residues 347 to 466 (NFTGRAITID…FSNLIRTLSS (120 aa)).

Belongs to the DnaA family. In terms of assembly, oligomerizes as a right-handed, spiral filament on DNA at oriC.

Its subcellular location is the cytoplasm. Its function is as follows. Plays an essential role in the initiation and regulation of chromosomal replication. ATP-DnaA binds to the origin of replication (oriC) to initiate formation of the DNA replication initiation complex once per cell cycle. Binds the DnaA box (a 9 base pair repeat at the origin) and separates the double-stranded (ds)DNA. Forms a right-handed helical filament on oriC DNA; dsDNA binds to the exterior of the filament while single-stranded (ss)DNA is stabiized in the filament's interior. The ATP-DnaA-oriC complex binds and stabilizes one strand of the AT-rich DNA unwinding element (DUE), permitting loading of DNA polymerase. After initiation quickly degrades to an ADP-DnaA complex that is not apt for DNA replication. Binds acidic phospholipids. The polypeptide is Chromosomal replication initiator protein DnaA (Salmonella choleraesuis (strain SC-B67)).